A 214-amino-acid chain; its full sequence is Adenylate kinase (214 aa).

Position 14 to 19 (14 to 19 (GSGKGT)) interacts with ATP. Residues 34–63 (SSGDLFRSAIKSATPLGSKAAEYINKGLLV) are NMP. AMP is bound by residues Ser35, Arg40, 61 to 63 (LLV), 89 to 92 (GFPR), and Gln96. The LID stretch occupies residues 130 to 163 (SRFICPACNYVYNQSQGFKECPTCHVALIRRSDD). Arg131 is a binding site for ATP. Zn(2+)-binding residues include Cys134 and Cys137. Residue 140–141 (VY) coordinates ATP. 2 residues coordinate Zn(2+): Cys150 and Cys153. The AMP site is built by Arg160 and Arg171. Position 199 (Thr199) interacts with ATP.

The protein belongs to the adenylate kinase family. Monomer.

It localises to the cytoplasm. The catalysed reaction is AMP + ATP = 2 ADP. The protein operates within purine metabolism; AMP biosynthesis via salvage pathway; AMP from ADP: step 1/1. In terms of biological role, catalyzes the reversible transfer of the terminal phosphate group between ATP and AMP. Plays an important role in cellular energy homeostasis and in adenine nucleotide metabolism. The sequence is that of Adenylate kinase from Chlamydia caviae (strain ATCC VR-813 / DSM 19441 / 03DC25 / GPIC) (Chlamydophila caviae).